We begin with the raw amino-acid sequence, 521 residues long: Adenosylhomocysteinase-like 1 (521 aa).

The disordered stretch occupies residues 1–92 (MNNLADTVVV…EKVQKNSKGS (92 aa)). Low complexity predominate over residues 54–73 (RSLSASSTDSFSSASYTGSS). Substrate is bound by residues D220 and E245. 246–248 (SVT) is an NAD(+) binding site. Residues K275 and D279 each contribute to the substrate site. NAD(+)-binding positions include 311 to 316 (GDVGKG), E332, 388 to 390 (MGH), N435, K515, 515 to 519 (KPNYY), and Y519.

The protein belongs to the adenosylhomocysteinase family. As to quaternary structure, interacts with Ahcy; the interaction may negatively regulate Ahcy catalytic activity. NAD(+) serves as cofactor.

Functionally, might play a role in the regulation of methionine metabolism possibly by binding and inactivating Ahcy. This chain is Adenosylhomocysteinase-like 1, found in Drosophila melanogaster (Fruit fly).